Reading from the N-terminus, the 261-residue chain is Nickel import ATP-binding protein NikD (261 aa).

In terms of domain architecture, ABC transporter spans 6–248; it reads LRIEGLTIAT…PRHDATRALV (243 aa). 41–48 is a binding site for ATP; it reads GASGSGKS.

This sequence belongs to the ABC transporter superfamily. Nickel importer (TC 3.A.1.5.3) family. The complex is composed of two ATP-binding proteins (NikD and NikE), two transmembrane proteins (NikB and NikC) and a solute-binding protein (NikA).

The protein localises to the cell inner membrane. The catalysed reaction is Ni(2+)(out) + ATP + H2O = Ni(2+)(in) + ADP + phosphate + H(+). In terms of biological role, part of the ABC transporter complex NikABCDE involved in nickel import. Responsible for energy coupling to the transport system. The polypeptide is Nickel import ATP-binding protein NikD (Rhodospirillum rubrum (strain ATCC 11170 / ATH 1.1.1 / DSM 467 / LMG 4362 / NCIMB 8255 / S1)).